Reading from the N-terminus, the 316-residue chain is MYSKILGTGSYLPSQIRTNADLEKMVETSDEWIVARTGIKERRIAAENETVADMGFYAAQNAIEMAGIDKNDIDLIIVATTSGSHTFPSSACQVQAKLGIKGCPAFARAAACSGFVYALSIADQHIKTGMCKNVLVIGSDTLSKTCDPTDRSTIILFGDGAGAVVVGASEEPGILSTHIYADGEFGDLLSLEVPERGKDADKWLHMAGNEVFKVAVTQLSKLVKDTLEANGMHKSELDWLVPHQANYRIISATAKKLSMSLDQVVITLDRHGNTSAATVPTALDEAVRDGRIQRGQTLLLEAFGGGFTWGSALVRF.

Active-site residues include cysteine 112 and histidine 243. The ACP-binding stretch occupies residues glutamine 244–arginine 248. Asparagine 273 is a catalytic residue.

The protein belongs to the thiolase-like superfamily. FabH family. In terms of assembly, homodimer.

It is found in the cytoplasm. The catalysed reaction is malonyl-[ACP] + acetyl-CoA + H(+) = 3-oxobutanoyl-[ACP] + CO2 + CoA. Its pathway is lipid metabolism; fatty acid biosynthesis. In terms of biological role, catalyzes the condensation reaction of fatty acid synthesis by the addition to an acyl acceptor of two carbons from malonyl-ACP. Catalyzes the first condensation reaction which initiates fatty acid synthesis and may therefore play a role in governing the total rate of fatty acid production. Possesses both acetoacetyl-ACP synthase and acetyl transacylase activities. Its substrate specificity determines the biosynthesis of branched-chain and/or straight-chain of fatty acids. The sequence is that of Beta-ketoacyl-[acyl-carrier-protein] synthase III 1 from Vibrio vulnificus (strain CMCP6).